The following is a 328-amino-acid chain: GMP reductase (328 aa).

Cys176 (thioimidate intermediate) is an active-site residue. 205–228 (IIADGGIRTHGDIAKSIRFGASMI) provides a ligand contact to NADP(+).

It belongs to the IMPDH/GMPR family. GuaC type 2 subfamily.

It catalyses the reaction IMP + NH4(+) + NADP(+) = GMP + NADPH + 2 H(+). Catalyzes the irreversible NADPH-dependent deamination of GMP to IMP. It functions in the conversion of nucleobase, nucleoside and nucleotide derivatives of G to A nucleotides, and in maintaining the intracellular balance of A and G nucleotides. This Streptococcus pneumoniae serotype 19F (strain G54) protein is GMP reductase.